Reading from the N-terminus, the 358-residue chain is Ion-translocating oxidoreductase complex subunit D (358 aa).

4 helical membrane passes run 19–39, 41–61, 79–99, and 125–145; these read IMLWVILAMMPAFFTQIYYFG, GVVLQSALAIGTAIIAEFIAI, LTALILAMAIPPYAPYWIIII, and IGYVILLISFPLQMTTWMPPI. Threonine 186 bears the FMN phosphoryl threonine mark. 5 helical membrane passes run 220-240, 248-268, 271-291, 297-317, and 321-341; these read FAQGWWQINVAFLAGGIFLIL, IPVAMLVTFFCLATATAFTGF, LSAISQLVSGAMMFGAFFIAT, SITPRGKIIFGALVGLFVYLI, and GNYPDGVAFAILLSNICVPLI.

Belongs to the NqrB/RnfD family. The complex is composed of six subunits: RnfA, RnfB, RnfC, RnfD, RnfE and RnfG. FMN serves as cofactor.

It localises to the cell inner membrane. Functionally, part of a membrane-bound complex that couples electron transfer with translocation of ions across the membrane. The chain is Ion-translocating oxidoreductase complex subunit D from Haemophilus influenzae (strain 86-028NP).